Reading from the N-terminus, the 285-residue chain is Foldase protein PrsA 2 (285 aa).

A signal peptide spans 1–20 (MRGKHIFIITALISILMLSA). Residue C21 is the site of N-palmitoyl cysteine attachment. Residue C21 is the site of S-diacylglycerol cysteine attachment. The PpiC domain maps to 134–224 (KPEIKASHIL…NGYHVIKLTD (91 aa)).

It belongs to the PrsA family.

It localises to the cell membrane. It catalyses the reaction [protein]-peptidylproline (omega=180) = [protein]-peptidylproline (omega=0). Its function is as follows. Plays a major role in protein secretion by helping the post-translocational extracellular folding of several secreted proteins. This chain is Foldase protein PrsA 2 (prsA2), found in Bacillus cereus (strain ATCC 14579 / DSM 31 / CCUG 7414 / JCM 2152 / NBRC 15305 / NCIMB 9373 / NCTC 2599 / NRRL B-3711).